The following is a 282-amino-acid chain: Shikimate dehydrogenase (NADP(+)) (282 aa).

Shikimate-binding positions include 15-17 (SKS) and threonine 62. Catalysis depends on lysine 66, which acts as the Proton acceptor. Residues asparagine 87 and aspartate 103 each coordinate shikimate. NADP(+)-binding positions include 128–132 (GAGGA), 152–157 (NRTPAK), and methionine 216. Tyrosine 218 is a binding site for shikimate. Glycine 240 lines the NADP(+) pocket.

This sequence belongs to the shikimate dehydrogenase family. As to quaternary structure, homodimer.

The catalysed reaction is shikimate + NADP(+) = 3-dehydroshikimate + NADPH + H(+). It functions in the pathway metabolic intermediate biosynthesis; chorismate biosynthesis; chorismate from D-erythrose 4-phosphate and phosphoenolpyruvate: step 4/7. Involved in the biosynthesis of the chorismate, which leads to the biosynthesis of aromatic amino acids. Catalyzes the reversible NADPH linked reduction of 3-dehydroshikimate (DHSA) to yield shikimate (SA). The polypeptide is Shikimate dehydrogenase (NADP(+)) (Nitrosococcus oceani (strain ATCC 19707 / BCRC 17464 / JCM 30415 / NCIMB 11848 / C-107)).